Here is a 335-residue protein sequence, read N- to C-terminus: Glyceraldehyde-3-phosphate dehydrogenase (335 aa).

NAD(+) is bound by residues 10–11 (RI), Asp-31, Arg-75, and Thr-122. Residues 152 to 154 (SCT) and Thr-183 contribute to the D-glyceraldehyde 3-phosphate site. The active-site Nucleophile is the Cys-153. Asn-184 lines the NAD(+) pocket. Residues Arg-198, 211–212 (TG), and Arg-234 contribute to the D-glyceraldehyde 3-phosphate site. Asn-318 serves as a coordination point for NAD(+).

It belongs to the glyceraldehyde-3-phosphate dehydrogenase family. In terms of assembly, homotetramer.

The protein localises to the cytoplasm. The enzyme catalyses D-glyceraldehyde 3-phosphate + phosphate + NAD(+) = (2R)-3-phospho-glyceroyl phosphate + NADH + H(+). Its pathway is carbohydrate degradation; glycolysis; pyruvate from D-glyceraldehyde 3-phosphate: step 1/5. Its function is as follows. Catalyzes the oxidative phosphorylation of glyceraldehyde 3-phosphate (G3P) to 1,3-bisphosphoglycerate (BPG) using the cofactor NAD. The first reaction step involves the formation of a hemiacetal intermediate between G3P and a cysteine residue, and this hemiacetal intermediate is then oxidized to a thioester, with concomitant reduction of NAD to NADH. The reduced NADH is then exchanged with the second NAD, and the thioester is attacked by a nucleophilic inorganic phosphate to produce BPG. This chain is Glyceraldehyde-3-phosphate dehydrogenase (gap), found in Borreliella burgdorferi (strain ATCC 35210 / DSM 4680 / CIP 102532 / B31) (Borrelia burgdorferi).